The following is a 35-amino-acid chain: Sorbin and SH3 domain-containing protein 1 (35 aa).

Residues 1–8 (LNRDDDSD) enclose the SoHo domain. Serine 15 is modified (phosphoserine). An SH3 domain is found at 22–35 (CDDGWFVGTSRRTK).

Interacts with the long isoform of AFDN and with VCL. AFDN and VCL bind to SORBS1 in a competitive manner and do not form a ternary complex. Interacts with ABL1, CBL, CBLB and INPPL1/SHIP2 through the third SH3 domain. Interaction with ABL1 occurs only after insulin stimulation while this has no effect on the interaction with INPPL1. Interacts with the insulin receptor but dissociates from it following insulin stimulation. Also interacts with SCA7, PTK2/FAK1 and flotillin. Interacts (via SH3 domain 2) with PXN. Interacts (via third SH3 domain) with the Ten-1 ICD form of TENM1; the interaction induces the translocation of SORBS1 to the nucleus. O-glycosylated.

The protein resides in the cell junction. It is found in the adherens junction. Its subcellular location is the cell membrane. The protein localises to the cytoplasm. It localises to the cytoskeleton. The protein resides in the focal adhesion. It is found in the nucleus. Its subcellular location is the nucleus matrix. In terms of biological role, plays a role in tyrosine phosphorylation of CBL by linking CBL to the insulin receptor. Required for insulin-stimulated glucose transport. Involved in formation of actin stress fibers and focal adhesions. This Rattus norvegicus (Rat) protein is Sorbin and SH3 domain-containing protein 1.